The sequence spans 165 residues: Transmembrane protein 128 (165 aa).

4 consecutive transmembrane segments (helical) span residues Asn-49–Phe-69, Trp-81–Val-101, Leu-119–Trp-139, and Phe-144–Leu-164.

It is found in the membrane. The chain is Transmembrane protein 128 (TMEM128) from Bos taurus (Bovine).